The sequence spans 530 residues: Plexin domain-containing protein 2 (530 aa).

The signal sequence occupies residues 1-30 (MARFRRADLAAAGVMLLCHFLTDRFQFAHG). Topologically, residues 31 to 455 (EPGHHTNDWI…AEKKGGTLHA (425 aa)) are extracellular. 2 N-linked (GlcNAc...) asparagine glycosylation sites follow: N103 and N160. Residues 327–372 (TCLQFNGCGPCVSSQIGFNCSWCSKLQRCSSGFDRHRQDWVDSGCP) form the PSI domain. The segment covering 378 to 387 (KEKMCEKTEP) has biased composition (basic and acidic residues). Positions 378–399 (KEKMCEKTEPGETSQTTTTSHT) are disordered. Residues 390-399 (TSQTTTTSHT) are compositionally biased toward low complexity. Residues 456–476 (GLIVGILILVLIIAAAILVTV) form a helical membrane-spanning segment. The Cytoplasmic portion of the chain corresponds to 477-530 (YMYHHPTSAASIFFIERRPSRWPAMKFRRGSGHPAYAEVEPVGEKEGFIVSEQC). S507 is subject to Phosphoserine.

This sequence belongs to the plexin family. As to quaternary structure, interacts with CTTN. In terms of tissue distribution, expressed in tumor endothelium and in vessels of some normal tissues, such as the muscle and lung.

It is found in the membrane. Its function is as follows. May play a role in tumor angiogenesis. In Mus musculus (Mouse), this protein is Plexin domain-containing protein 2 (Plxdc2).